Consider the following 273-residue polypeptide: Nicotinamide N-methyltransferase (273 aa).

S-adenosyl-L-methionine-binding positions include tyrosine 35, tyrosine 40, 74-75 (GA), tyrosine 80, aspartate 96, asparagine 101, and 152-153 (NV).

Belongs to the class I-like SAM-binding methyltransferase superfamily. NNMT/PNMT/TEMT family.

The enzyme catalyses nicotinamide + S-adenosyl-L-methionine = 1-methylnicotinamide + S-adenosyl-L-homocysteine. In terms of biological role, catalyzes the N-methylation of nicotinamide and other pyridines to form pyridinium ions. Involved in regulation of lifespan extension downstream of the sirtuin sir-2.1, probably through its role in nicotinic acid metabolism. In Caenorhabditis elegans, this protein is Nicotinamide N-methyltransferase.